Reading from the N-terminus, the 98-residue chain is ESAT-6-like protein EsxM (98 aa).

Belongs to the WXG100 family. CFP-10 subfamily.

It is found in the secreted. The protein is ESAT-6-like protein EsxM (esxM) of Mycobacterium bovis (strain ATCC BAA-935 / AF2122/97).